Consider the following 681-residue polypeptide: DNA ligase (681 aa).

Residues 45–49, 94–95, and Glu-120 contribute to the NAD(+) site; these read DFDFD and SL. Lys-122 serves as the catalytic N6-AMP-lysine intermediate. The NAD(+) site is built by Arg-143, Glu-177, Lys-289, and Lys-313. Residues Cys-403, Cys-406, Cys-421, and Cys-426 each coordinate Zn(2+). Residues 593–681 enclose the BRCT domain; the sequence is SDQQPFAGQS…SLKINFKNTI (89 aa).

This sequence belongs to the NAD-dependent DNA ligase family. LigA subfamily. Mg(2+) is required as a cofactor. Requires Mn(2+) as cofactor.

The enzyme catalyses NAD(+) + (deoxyribonucleotide)n-3'-hydroxyl + 5'-phospho-(deoxyribonucleotide)m = (deoxyribonucleotide)n+m + AMP + beta-nicotinamide D-nucleotide.. In terms of biological role, DNA ligase that catalyzes the formation of phosphodiester linkages between 5'-phosphoryl and 3'-hydroxyl groups in double-stranded DNA using NAD as a coenzyme and as the energy source for the reaction. It is essential for DNA replication and repair of damaged DNA. The sequence is that of DNA ligase from Leptospira borgpetersenii serovar Hardjo-bovis (strain L550).